The chain runs to 550 residues: Hydroxylamine reductase (550 aa).

Residues cysteine 7, cysteine 10, cysteine 19, and cysteine 25 each contribute to the [4Fe-4S] cluster site. Hybrid [4Fe-2O-2S] cluster contacts are provided by histidine 244, glutamate 268, cysteine 312, cysteine 405, cysteine 433, cysteine 458, glutamate 493, and lysine 495. Residue cysteine 405 is modified to Cysteine persulfide.

It belongs to the HCP family. It depends on [4Fe-4S] cluster as a cofactor. The cofactor is hybrid [4Fe-2O-2S] cluster.

Its subcellular location is the cytoplasm. The catalysed reaction is A + NH4(+) + H2O = hydroxylamine + AH2 + H(+). Its function is as follows. Catalyzes the reduction of hydroxylamine to form NH(3) and H(2)O. This is Hydroxylamine reductase from Porphyromonas gingivalis (strain ATCC 33277 / DSM 20709 / CIP 103683 / JCM 12257 / NCTC 11834 / 2561).